The following is a 240-amino-acid chain: Zinc finger CCCH domain-containing protein 52 (240 aa).

Disordered stretches follow at residues 1-37 and 81-106; these read MDAR…GLGS and SQVS…PGSG. The C3H1-type 1 zinc finger occupies 36 to 64; that stretch reads GSKSKPCTKFFSTSGCPFGDNCHFLHYVP. The segment covering 89–104 has biased composition (gly residues); the sequence is GSGGPGGRFSGRGDPG. A KH domain is found at 113–177; that stretch reads ASTSKISVDA…EQINVASGMV (65 aa). The C3H1-type 2 zinc-finger motif lies at 205-232; the sequence is NYKTKICDRYSKGNCTYGDRCHFAHGES.

This Arabidopsis thaliana (Mouse-ear cress) protein is Zinc finger CCCH domain-containing protein 52.